A 255-amino-acid polypeptide reads, in one-letter code: 1-(5-phosphoribosyl)-5-[(5-phosphoribosylamino)methylideneamino] imidazole-4-carboxamide isomerase (255 aa).

The Proton acceptor role is filled by Asp-8. Asp-129 (proton donor) is an active-site residue.

This sequence belongs to the HisA/HisF family.

It is found in the cytoplasm. The enzyme catalyses 1-(5-phospho-beta-D-ribosyl)-5-[(5-phospho-beta-D-ribosylamino)methylideneamino]imidazole-4-carboxamide = 5-[(5-phospho-1-deoxy-D-ribulos-1-ylimino)methylamino]-1-(5-phospho-beta-D-ribosyl)imidazole-4-carboxamide. It functions in the pathway amino-acid biosynthesis; L-histidine biosynthesis; L-histidine from 5-phospho-alpha-D-ribose 1-diphosphate: step 4/9. The sequence is that of 1-(5-phosphoribosyl)-5-[(5-phosphoribosylamino)methylideneamino] imidazole-4-carboxamide isomerase from Prochlorococcus marinus (strain MIT 9313).